A 58-amino-acid polypeptide reads, in one-letter code: UPF0391 membrane protein Sbal195_1447 (58 aa).

Transmembrane regions (helical) follow at residues 6-26 and 28-48; these read LVFL…IAGA and AGIA…SLLV.

Belongs to the UPF0391 family.

It localises to the cell membrane. The polypeptide is UPF0391 membrane protein Sbal195_1447 (Shewanella baltica (strain OS195)).